A 241-amino-acid polypeptide reads, in one-letter code: Eukaryotic translation initiation factor 6 (241 aa).

Belongs to the eIF-6 family. In terms of assembly, monomer. Associates with the 60S ribosomal subunit.

The protein localises to the cytoplasm. It is found in the nucleus. The protein resides in the nucleolus. Binds to the 60S ribosomal subunit and prevents its association with the 40S ribosomal subunit to form the 80S initiation complex in the cytoplasm. Is also involved in ribosome biogenesis. Associates with pre-60S subunits in the nucleus and is involved in its nuclear export. The chain is Eukaryotic translation initiation factor 6 from Encephalitozoon cuniculi (strain GB-M1) (Microsporidian parasite).